We begin with the raw amino-acid sequence, 148 residues long: Large ribosomal subunit protein bL9 (148 aa).

Belongs to the bacterial ribosomal protein bL9 family.

In terms of biological role, binds to the 23S rRNA. The protein is Large ribosomal subunit protein bL9 of Listeria welshimeri serovar 6b (strain ATCC 35897 / DSM 20650 / CCUG 15529 / CIP 8149 / NCTC 11857 / SLCC 5334 / V8).